Reading from the N-terminus, the 521-residue chain is Ribonuclease Y (521 aa).

A helical membrane pass occupies residues T5 to V25. Residues K87–E117 are disordered. One can recognise a KH domain in the interval T211–L274. Residues V337–A430 form the HD domain.

The protein belongs to the RNase Y family.

The protein localises to the cell membrane. In terms of biological role, endoribonuclease that initiates mRNA decay. The sequence is that of Ribonuclease Y from Bacillus mycoides (strain KBAB4) (Bacillus weihenstephanensis).